We begin with the raw amino-acid sequence, 426 residues long: Glutamyl-tRNA reductase (426 aa).

Residues 49-52, S109, 114-116, and Q120 each bind substrate; these read TCNR and EGQ. Catalysis depends on C50, which acts as the Nucleophile. 189 to 194 is a binding site for NADP(+); that stretch reads GAGETG.

This sequence belongs to the glutamyl-tRNA reductase family. In terms of assembly, homodimer.

It catalyses the reaction (S)-4-amino-5-oxopentanoate + tRNA(Glu) + NADP(+) = L-glutamyl-tRNA(Glu) + NADPH + H(+). It participates in porphyrin-containing compound metabolism; protoporphyrin-IX biosynthesis; 5-aminolevulinate from L-glutamyl-tRNA(Glu): step 1/2. Its pathway is porphyrin-containing compound metabolism; chlorophyll biosynthesis. Its function is as follows. Catalyzes the NADPH-dependent reduction of glutamyl-tRNA(Glu) to glutamate 1-semialdehyde (GSA). The sequence is that of Glutamyl-tRNA reductase from Chlorobium chlorochromatii (strain CaD3).